The chain runs to 368 residues: Protein tesmin/TSO1-like CXC 8 (368 aa).

The 122-residue stretch at 64–185 folds into the CRC domain; it reads KHKGCRCKQS…KCINCKNVSE (122 aa).

This sequence belongs to the lin-54 family.

The protein resides in the nucleus. Functionally, plays a role in development of both male and female reproductive tissues. This is Protein tesmin/TSO1-like CXC 8 (TCX8) from Arabidopsis thaliana (Mouse-ear cress).